Reading from the N-terminus, the 50-residue chain is Large ribosomal subunit protein bL33 (50 aa).

The protein belongs to the bacterial ribosomal protein bL33 family.

In Endomicrobium trichonymphae, this protein is Large ribosomal subunit protein bL33.